A 511-amino-acid polypeptide reads, in one-letter code: MIRSVVIVGGGTAGWMTASYLKAAFDDRIDVTLVESGNVRRIGVGEATFSTVRHFFDYLGLDEREWLPRCAGGYKLGIRFENWSEPGEYFYHPFERLRVVDGFNMAEWWLAVGDRRTSFSEACYLTHRLCEAKRAPRMLDGSLFASQVDESLGRSTLAEQRAQFPYAYHFDADEVARYLSEYAIARGVRHVVDDVQHVGQDERGWISGVHTKQHGEISGDLFVDCTGFRGLLINQTLGGRFQSFSDVLPNNRAVALRVPRENDEDMRPYTTATAMSAGWMWTIPLFKRDGNGYVYSDEFISPEEAERELRSTVAPGRDDLEANHIQMRIGRNERTWINNCVAVGLSAAFVEPLESTGIFFIQHAIEQLVKHFPGERWDPVLISAYNERMAHMVDGVKEFLVLHYKGAQREDTPYWKAAKTRAMPDGLARKLELSASHLLDEQTIYPYYHGFETYSWITMNLGLGIVPERPRPALLHMDPAPALAEFERLRREGDELIAALPSCYEYLASIQ.

FAD-binding residues include Gly10, Ala13, Ser36, Val39, Ile42, Val44, and Ala47. Ser50 contributes to the L-tryptophan binding site. The active site involves Lys75. Positions 93, 160, and 163 each coordinate L-tryptophan. Positions 195 and 345 each coordinate FAD. The chloride site is built by Thr356 and Gly357. Ile358 serves as a coordination point for FAD. L-tryptophan is bound by residues Gly450 and Tyr454.

Belongs to the flavin-dependent halogenase family. Bacterial tryptophan halogenase subfamily. As to quaternary structure, homodimer.

It catalyses the reaction L-tryptophan + FADH2 + chloride + O2 = 5-chloro-L-tryptophan + FAD + 2 H2O. Its pathway is antibiotic biosynthesis. In terms of biological role, involved in the biosynthesis of the antibiotic compound pyrroindomycin B. Catalyzes the chlorination of tryptophan (Trp) at C5 position to yield 5-chloro-L-tryptophan. It is also able to use bromide ions to generate monobrominated Trp, but the brominating activity is only about 75% of the chlorinating activity. This is Tryptophan 5-halogenase PyrH from Streptomyces rugosporus.